The following is a 449-amino-acid chain: Signal recognition particle protein (449 aa).

GTP contacts are provided by residues 109-116 (GLQGSGKT), 191-195 (DTAGR), and 249-252 (SRID).

It belongs to the GTP-binding SRP family. SRP54 subfamily. Part of the signal recognition particle protein translocation system, which is composed of SRP and FtsY. SRP is a ribonucleoprotein composed of Ffh and a 4.5S RNA molecule.

The protein resides in the cytoplasm. The enzyme catalyses GTP + H2O = GDP + phosphate + H(+). Involved in targeting and insertion of nascent membrane proteins into the cytoplasmic membrane. Binds to the hydrophobic signal sequence of the ribosome-nascent chain (RNC) as it emerges from the ribosomes. The SRP-RNC complex is then targeted to the cytoplasmic membrane where it interacts with the SRP receptor FtsY. Interaction with FtsY leads to the transfer of the RNC complex to the Sec translocase for insertion into the membrane, the hydrolysis of GTP by both Ffh and FtsY, and the dissociation of the SRP-FtsY complex into the individual components. The protein is Signal recognition particle protein of Rickettsia bellii (strain RML369-C).